The primary structure comprises 70 residues: Large ribosomal subunit protein bL31 (70 aa).

Positions 17, 19, 37, and 40 each coordinate Zn(2+).

Belongs to the bacterial ribosomal protein bL31 family. Type A subfamily. As to quaternary structure, part of the 50S ribosomal subunit. The cofactor is Zn(2+).

Its function is as follows. Binds the 23S rRNA. This chain is Large ribosomal subunit protein bL31, found in Clostridium kluyveri (strain NBRC 12016).